The sequence spans 402 residues: Nicotinate phosphoribosyltransferase (402 aa).

Residue His-224 is modified to Phosphohistidine; by autocatalysis.

Belongs to the NAPRTase family. Transiently phosphorylated on a His residue during the reaction cycle. Phosphorylation strongly increases the affinity for substrates and increases the rate of nicotinate D-ribonucleotide production. Dephosphorylation regenerates the low-affinity form of the enzyme, leading to product release.

It carries out the reaction nicotinate + 5-phospho-alpha-D-ribose 1-diphosphate + ATP + H2O = nicotinate beta-D-ribonucleotide + ADP + phosphate + diphosphate. It participates in cofactor biosynthesis; NAD(+) biosynthesis; nicotinate D-ribonucleotide from nicotinate: step 1/1. Its function is as follows. Catalyzes the synthesis of beta-nicotinate D-ribonucleotide from nicotinate and 5-phospho-D-ribose 1-phosphate at the expense of ATP. The protein is Nicotinate phosphoribosyltransferase of Neisseria meningitidis serogroup C (strain 053442).